Reading from the N-terminus, the 530-residue chain is UDP-glucuronosyltransferase 2B14 (530 aa).

A signal peptide spans Met-1–Cys-24. N-linked (GlcNAc...) asparagine glycosylation is found at Asn-134 and Asn-316. Residues Val-494–Ile-510 traverse the membrane as a helical segment.

This sequence belongs to the UDP-glycosyltransferase family.

It localises to the microsome membrane. The protein localises to the endoplasmic reticulum membrane. The enzyme catalyses glucuronate acceptor + UDP-alpha-D-glucuronate = acceptor beta-D-glucuronoside + UDP + H(+). Functionally, UDPGT is of major importance in the conjugation and subsequent elimination of potentially toxic xenobiotics and endogenous compounds. The protein is UDP-glucuronosyltransferase 2B14 (UGT2B14) of Oryctolagus cuniculus (Rabbit).